The primary structure comprises 382 residues: D-galactonate dehydratase (382 aa).

Position 183 (aspartate 183) interacts with Mg(2+). The active-site Proton donor is the histidine 185. Glutamate 209 and glutamate 235 together coordinate Mg(2+). Residue histidine 285 is the Proton acceptor of the active site. A disordered region spans residues 361-382 (NENPPDWRNPVWRHSDGSIAEW).

Belongs to the mandelate racemase/muconate lactonizing enzyme family. GalD subfamily. Requires Mg(2+) as cofactor.

It carries out the reaction D-galactonate = 2-dehydro-3-deoxy-D-galactonate + H2O. Its pathway is carbohydrate acid metabolism; D-galactonate degradation; D-glyceraldehyde 3-phosphate and pyruvate from D-galactonate: step 1/3. Its function is as follows. Catalyzes the dehydration of D-galactonate to 2-keto-3-deoxy-D-galactonate. The chain is D-galactonate dehydratase from Xanthomonas euvesicatoria pv. vesicatoria (strain 85-10) (Xanthomonas campestris pv. vesicatoria).